The primary structure comprises 279 residues: Protein phosphatase 1 regulatory subunit 3E (279 aa).

Residues Ser16 and Ser33 each carry the phosphoserine modification. The disordered stretch occupies residues 28–86 (RSQRPSLEEEPEEEPGEGGTRFGARSRAHAPSRGRRARSAPAGGGGARAPRSRSPDTRK). A compositionally biased stretch (basic residues) spans 51-65 (ARSRAHAPSRGRRAR). At Ser66 the chain carries Phosphoserine. The PP1-binding motif signature appears at 87–90 (RVRF). The region spanning 154 to 259 (AARLLTQRIC…NNGGRDYALR (106 aa)) is the CBM21 domain. The segment at 176 to 198 (GSARVVDLAYEKRVSVRWSADGW) is glycogen-binding motif. Residues 248–256 (WDNNGGRDY) form a substrate-binding motif region.

Expressed in skeletal muscle and heart with barely detectable levels in liver.

Acts as a glycogen-targeting subunit for PP1. PP1 is involved in glycogen metabolism and contributes to the activation of glycogen synthase leading to an increase in glycogen synthesis. In Homo sapiens (Human), this protein is Protein phosphatase 1 regulatory subunit 3E (PPP1R3E).